The chain runs to 46 residues: Protein krueppel (46 aa).

C2H2-type zinc fingers lie at residues 1–4 (MRLH), 10–32 (YHCT…LRVH), and 38–46 (YACELCTSK).

This sequence belongs to the krueppel C2H2-type zinc-finger protein family.

The protein resides in the nucleus. Krueppel is a gap class segmentation protein. This chain is Protein krueppel (Kr), found in Lithobius forficatus (Centipede).